The primary structure comprises 185 residues: Ribosome-recycling factor (185 aa).

The protein belongs to the RRF family.

It is found in the cytoplasm. Its function is as follows. Responsible for the release of ribosomes from messenger RNA at the termination of protein biosynthesis. May increase the efficiency of translation by recycling ribosomes from one round of translation to another. This is Ribosome-recycling factor from Clostridium botulinum (strain Eklund 17B / Type B).